The chain runs to 488 residues: 3-octaprenyl-4-hydroxybenzoate carboxy-lyase (488 aa).

A Mn(2+)-binding site is contributed by asparagine 172. Residues 175 to 177 (IYR), 189 to 191 (RWL), and 194 to 195 (RG) each bind prenylated FMN. Position 238 (glutamate 238) interacts with Mn(2+). Aspartate 287 acts as the Proton donor in catalysis.

This sequence belongs to the UbiD family. As to quaternary structure, homohexamer. It depends on prenylated FMN as a cofactor. The cofactor is Mn(2+).

It is found in the cell membrane. It carries out the reaction a 4-hydroxy-3-(all-trans-polyprenyl)benzoate + H(+) = a 2-(all-trans-polyprenyl)phenol + CO2. The protein operates within cofactor biosynthesis; ubiquinone biosynthesis. In terms of biological role, catalyzes the decarboxylation of 3-octaprenyl-4-hydroxy benzoate to 2-octaprenylphenol, an intermediate step in ubiquinone biosynthesis. The sequence is that of 3-octaprenyl-4-hydroxybenzoate carboxy-lyase from Pseudomonas fluorescens (strain ATCC BAA-477 / NRRL B-23932 / Pf-5).